The following is a 654-amino-acid chain: DNA-directed RNA polymerase III subunit RPC3 (654 aa).

Thr-27 carries the phosphothreonine modification. 2 disordered regions span residues 381 to 401 and 422 to 448; these read LSRK…ASLP and KSLQ…EDPH. A phosphoserine mark is found at Ser-392 and Ser-394. The span at 429-444 shows a compositional bias: acidic residues; sequence DTQEEDEEEEDLDADT. The leucine-zipper stretch occupies residues 581 to 602; sequence LEWNMANLLFKKEKLKQENSTL.

It belongs to the RNA polymerase beta chain family. Component of the RNA polymerase III (Pol III) complex consisting of 17 subunits.

Its subcellular location is the cytoplasm. It localises to the nucleus. Its function is as follows. DNA-dependent RNA polymerase catalyzes the transcription of DNA into RNA using the four ribonucleoside triphosphates as substrates. Specific core component of RNA polymerase III which synthesizes small RNAs, such as 5S rRNA and tRNAs. The chain is DNA-directed RNA polymerase III subunit RPC3 (RPC82) from Saccharomyces cerevisiae (strain YJM789) (Baker's yeast).